A 393-amino-acid polypeptide reads, in one-letter code: uncharacterized protein (393 aa).

In terms of domain architecture, TRAM spans 12-70 (APLLGSKIKLNIEKLAIGGAGVARHEGMVVFVPQAAPNEEILAEITLVKKNFMEARVVE). The [4Fe-4S] cluster site is built by Cys-83, Cys-89, Cys-92, and Cys-166. Residues Gln-221, Tyr-250, Glu-273, and Asp-316 each coordinate S-adenosyl-L-methionine. Catalysis depends on Cys-343, which acts as the Nucleophile.

It belongs to the class I-like SAM-binding methyltransferase superfamily. RNA M5U methyltransferase family.

This is an uncharacterized protein from Bdellovibrio bacteriovorus (strain ATCC 15356 / DSM 50701 / NCIMB 9529 / HD100).